The chain runs to 427 residues: Mucorpepsin (427 aa).

The N-terminal stretch at 1-22 (MLFSKISSAILLTAASFALTSA) is a signal peptide. A propeptide spans 23 to 66 (RPVSKQSDADDKLLALPLTSVNRKYSQTKHGQQAAEKLGGIKAF) (activation peptide). One can recognise a Peptidase A1 domain in the interval 86–418 (YAIPVSIGTP…DFGKNRIGFA (333 aa)). The active site involves D104. Cysteines 117 and 123 form a disulfide. N-linked (GlcNAc...) asparagine glycosylation occurs at N254. The active site involves D303. Cysteines 338 and 382 form a disulfide.

Belongs to the peptidase A1 family.

It carries out the reaction Hydrolysis of proteins, favoring hydrophobic residues at P1 and P1'. Clots milk. Does not accept Lys at P1, and hence does not activate trypsinogen.. In terms of biological role, this enzyme, capable of clotting milk is frequently used for cheese production. This Rhizomucor pusillus protein is Mucorpepsin.